A 422-amino-acid chain; its full sequence is Probable alpha-1,6-mannosyltransferase MNN11 (422 aa).

Residues 1–31 lie on the Cytoplasmic side of the membrane; the sequence is MAIKPRTKGKTYSSRSVGSQWFNRLGFKQNK. A helical; Signal-anchor for type II membrane protein transmembrane segment spans residues 32–52; the sequence is YGTCKFLSIITAFVFILYFFS. The Lumenal segment spans residues 53 to 422; it reads NRFYPISRSA…GHMYQKIKKS (370 aa).

The protein belongs to the glycosyltransferase 34 family. As to quaternary structure, component of the M-Pol II complex composed of ANP1, MNN9, MNN10, MNN11 and HOC1.

The protein localises to the golgi apparatus. The protein resides in the cis-Golgi network membrane. In terms of biological role, required for synthesis of full-length mannan chains. Functionally, the M-Pol II complex possesses alpha-1,6-mannosyltransferase activity and is probably involved in the elongation of the mannan backbone of N-linked glycans on cell wall and periplasmic proteins. The sequence is that of Probable alpha-1,6-mannosyltransferase MNN11 (MNN11) from Saccharomyces cerevisiae (strain ATCC 204508 / S288c) (Baker's yeast).